The sequence spans 431 residues: 3-phosphoshikimate 1-carboxyvinyltransferase (431 aa).

3-phosphoshikimate is bound by residues K23, S24, and R28. K23 provides a ligand contact to phosphoenolpyruvate. Positions 96 and 124 each coordinate phosphoenolpyruvate. Positions 169, 171, 317, and 344 each coordinate 3-phosphoshikimate. Q171 contributes to the phosphoenolpyruvate binding site. D317 acts as the Proton acceptor in catalysis. Phosphoenolpyruvate is bound by residues R348 and R390.

The protein belongs to the EPSP synthase family. In terms of assembly, monomer.

It localises to the cytoplasm. The enzyme catalyses 3-phosphoshikimate + phosphoenolpyruvate = 5-O-(1-carboxyvinyl)-3-phosphoshikimate + phosphate. It functions in the pathway metabolic intermediate biosynthesis; chorismate biosynthesis; chorismate from D-erythrose 4-phosphate and phosphoenolpyruvate: step 6/7. In terms of biological role, catalyzes the transfer of the enolpyruvyl moiety of phosphoenolpyruvate (PEP) to the 5-hydroxyl of shikimate-3-phosphate (S3P) to produce enolpyruvyl shikimate-3-phosphate and inorganic phosphate. The protein is 3-phosphoshikimate 1-carboxyvinyltransferase of Syntrophotalea carbinolica (strain DSM 2380 / NBRC 103641 / GraBd1) (Pelobacter carbinolicus).